We begin with the raw amino-acid sequence, 102 residues long: Major basic nuclear protein 2 (102 aa).

A compositionally biased stretch (basic residues) spans 1 to 11 (MKAMKATKKAM). A disordered region spans residues 1–43 (MKAMKATKKAMTKTGLAEALAPKPSSARRIAPPSSRAWPPSAQ). Residues 21–42 (APKPSSARRIAPPSSRAWPPSA) show a composition bias toward low complexity.

It is found in the nucleus. The sequence is that of Major basic nuclear protein 2 (HCc2) from Crypthecodinium cohnii (Dinoflagellate).